A 305-amino-acid polypeptide reads, in one-letter code: ADP,ATP carrier protein (305 aa).

3 Solcar repeats span residues 8–101 (SNFA…IKAM), 112–204 (KWFA…LKPL), and 212–298 (NSFL…LQVI). The next 5 membrane-spanning stretches (helical) occupy residues 10-37 (FAIDFLMGGVSAAVSKTAAAPIERVKLL), 78-102 (TANVIRYFPTQALNFAFKDKIKAMF), 110-130 (YAKWFAGNLASGGLAGGLSLL), 180-201 (FLPSVVGIVVYRGLYFGLYDSL), and 215-235 (LASFLLGWAVTTGASTASYPL). Positions 83 and 95 each coordinate ADP. Arginine 239 lines the ADP pocket. Positions 239–244 (RRRMMM) are important for transport activity. The short motif at 239 to 244 (RRRMMM) is the Nucleotide carrier signature motif element. Residues 275-295 (CGANILRGVAGAGVISMYDQL) traverse the membrane as a helical segment.

This sequence belongs to the mitochondrial carrier (TC 2.A.29) family. As to quaternary structure, monomer.

It is found in the mitochondrion inner membrane. The enzyme catalyses ADP(in) + ATP(out) = ADP(out) + ATP(in). With respect to regulation, the matrix-open state (m-state) is inhibited by the membrane-permeable bongkrekic acid (BKA). The cytoplasmic-open state (c-state) is inhibited by the membrane-impermeable toxic inhibitor carboxyatractyloside (CATR). Its function is as follows. ADP:ATP antiporter that mediates import of ADP into the mitochondrial matrix for ATP synthesis, and export of ATP out to fuel the cell. Cycles between the cytoplasmic-open state (c-state) and the matrix-open state (m-state): operates by the alternating access mechanism with a single substrate-binding site intermittently exposed to either the cytosolic (c-state) or matrix (m-state) side of the inner mitochondrial membrane. The polypeptide is ADP,ATP carrier protein (AAC) (Kluyveromyces lactis (strain ATCC 8585 / CBS 2359 / DSM 70799 / NBRC 1267 / NRRL Y-1140 / WM37) (Yeast)).